We begin with the raw amino-acid sequence, 334 residues long: Anthranilate phosphoribosyltransferase (334 aa).

5-phospho-alpha-D-ribose 1-diphosphate-binding positions include Gly81, 84 to 85, Thr89, 91 to 94, 109 to 117, and Ala121; these read GD, NIST, and KHGSRSVSS. Position 81 (Gly81) interacts with anthranilate. Ser93 is a binding site for Mg(2+). Arg167 contributes to the anthranilate binding site. Mg(2+) is bound by residues Asp225 and Glu226.

It belongs to the anthranilate phosphoribosyltransferase family. As to quaternary structure, homodimer. Requires Mg(2+) as cofactor.

It carries out the reaction N-(5-phospho-beta-D-ribosyl)anthranilate + diphosphate = 5-phospho-alpha-D-ribose 1-diphosphate + anthranilate. The protein operates within amino-acid biosynthesis; L-tryptophan biosynthesis; L-tryptophan from chorismate: step 2/5. In terms of biological role, catalyzes the transfer of the phosphoribosyl group of 5-phosphorylribose-1-pyrophosphate (PRPP) to anthranilate to yield N-(5'-phosphoribosyl)-anthranilate (PRA). The sequence is that of Anthranilate phosphoribosyltransferase from Actinobacillus pleuropneumoniae serotype 7 (strain AP76).